The sequence spans 117 residues: Ribosome-binding factor A (117 aa).

Belongs to the RbfA family. Monomer. Binds 30S ribosomal subunits, but not 50S ribosomal subunits or 70S ribosomes.

It is found in the cytoplasm. Its function is as follows. One of several proteins that assist in the late maturation steps of the functional core of the 30S ribosomal subunit. Associates with free 30S ribosomal subunits (but not with 30S subunits that are part of 70S ribosomes or polysomes). Required for efficient processing of 16S rRNA. May interact with the 5'-terminal helix region of 16S rRNA. The polypeptide is Ribosome-binding factor A (Leptospira interrogans serogroup Icterohaemorrhagiae serovar Lai (strain 56601)).